We begin with the raw amino-acid sequence, 891 residues long: Alanine--tRNA ligase (891 aa).

Residues His-574, His-578, Cys-676, and His-680 each contribute to the Zn(2+) site.

This sequence belongs to the class-II aminoacyl-tRNA synthetase family. The cofactor is Zn(2+).

Its subcellular location is the cytoplasm. The enzyme catalyses tRNA(Ala) + L-alanine + ATP = L-alanyl-tRNA(Ala) + AMP + diphosphate. Functionally, catalyzes the attachment of alanine to tRNA(Ala) in a two-step reaction: alanine is first activated by ATP to form Ala-AMP and then transferred to the acceptor end of tRNA(Ala). Also edits incorrectly charged Ser-tRNA(Ala) and Gly-tRNA(Ala) via its editing domain. The polypeptide is Alanine--tRNA ligase (Synechococcus sp. (strain WH7803)).